The chain runs to 1385 residues: DNA-directed RNA polymerase subunit beta (1385 aa).

The protein belongs to the RNA polymerase beta chain family. In terms of assembly, the RNAP catalytic core consists of 2 alpha, 1 beta, 1 beta' and 1 omega subunit. When a sigma factor is associated with the core the holoenzyme is formed, which can initiate transcription.

It catalyses the reaction RNA(n) + a ribonucleoside 5'-triphosphate = RNA(n+1) + diphosphate. Functionally, DNA-dependent RNA polymerase catalyzes the transcription of DNA into RNA using the four ribonucleoside triphosphates as substrates. This is DNA-directed RNA polymerase subunit beta from Jannaschia sp. (strain CCS1).